The sequence spans 140 residues: Large ribosomal subunit protein uL13 (140 aa).

Belongs to the universal ribosomal protein uL13 family. As to quaternary structure, part of the 50S ribosomal subunit.

In terms of biological role, this protein is one of the early assembly proteins of the 50S ribosomal subunit, although it is not seen to bind rRNA by itself. It is important during the early stages of 50S assembly. This Nautilia profundicola (strain ATCC BAA-1463 / DSM 18972 / AmH) protein is Large ribosomal subunit protein uL13.